The sequence spans 227 residues: Cytochrome c oxidase subunit 2 (227 aa).

At 1–14 the chain is on the mitochondrial intermembrane side; sequence MAYPFQLGLQDATS. Residues 15 to 45 traverse the membrane as a helical segment; it reads PIMEELTNFHDHTLMIVFLISSLVLYLISLM. The Mitochondrial matrix segment spans residues 46-59; sequence LSTKLIHTSTMDAQ. Residues 60–87 traverse the membrane as a helical segment; sequence EVETIWTILPAIILIMIALPSLRILYMM. Over 88–227 the chain is Mitochondrial intermembrane; it reads DEINNPALTV…LFENWSISMS (140 aa). Residues histidine 161, cysteine 196, glutamate 198, cysteine 200, histidine 204, and methionine 207 each contribute to the Cu cation site. Glutamate 198 provides a ligand contact to Mg(2+).

This sequence belongs to the cytochrome c oxidase subunit 2 family. Component of the cytochrome c oxidase (complex IV, CIV), a multisubunit enzyme composed of 14 subunits. The complex is composed of a catalytic core of 3 subunits MT-CO1, MT-CO2 and MT-CO3, encoded in the mitochondrial DNA, and 11 supernumerary subunits COX4I, COX5A, COX5B, COX6A, COX6B, COX6C, COX7A, COX7B, COX7C, COX8 and NDUFA4, which are encoded in the nuclear genome. The complex exists as a monomer or a dimer and forms supercomplexes (SCs) in the inner mitochondrial membrane with NADH-ubiquinone oxidoreductase (complex I, CI) and ubiquinol-cytochrome c oxidoreductase (cytochrome b-c1 complex, complex III, CIII), resulting in different assemblies (supercomplex SCI(1)III(2)IV(1) and megacomplex MCI(2)III(2)IV(2)). Found in a complex with TMEM177, COA6, COX18, COX20, SCO1 and SCO2. Interacts with TMEM177 in a COX20-dependent manner. Interacts with COX20. Interacts with COX16. It depends on Cu cation as a cofactor.

The protein resides in the mitochondrion inner membrane. The catalysed reaction is 4 Fe(II)-[cytochrome c] + O2 + 8 H(+)(in) = 4 Fe(III)-[cytochrome c] + 2 H2O + 4 H(+)(out). Component of the cytochrome c oxidase, the last enzyme in the mitochondrial electron transport chain which drives oxidative phosphorylation. The respiratory chain contains 3 multisubunit complexes succinate dehydrogenase (complex II, CII), ubiquinol-cytochrome c oxidoreductase (cytochrome b-c1 complex, complex III, CIII) and cytochrome c oxidase (complex IV, CIV), that cooperate to transfer electrons derived from NADH and succinate to molecular oxygen, creating an electrochemical gradient over the inner membrane that drives transmembrane transport and the ATP synthase. Cytochrome c oxidase is the component of the respiratory chain that catalyzes the reduction of oxygen to water. Electrons originating from reduced cytochrome c in the intermembrane space (IMS) are transferred via the dinuclear copper A center (CU(A)) of subunit 2 and heme A of subunit 1 to the active site in subunit 1, a binuclear center (BNC) formed by heme A3 and copper B (CU(B)). The BNC reduces molecular oxygen to 2 water molecules using 4 electrons from cytochrome c in the IMS and 4 protons from the mitochondrial matrix. This is Cytochrome c oxidase subunit 2 (MT-CO2) from Gerbilliscus robustus (Fringe-tailed gerbil).